Reading from the N-terminus, the 291-residue chain is 33 kDa chaperonin (291 aa).

Disulfide bonds link C237–C239 and C270–C273.

The protein belongs to the HSP33 family. Under oxidizing conditions two disulfide bonds are formed involving the reactive cysteines. Under reducing conditions zinc is bound to the reactive cysteines and the protein is inactive.

It is found in the cytoplasm. Its function is as follows. Redox regulated molecular chaperone. Protects both thermally unfolding and oxidatively damaged proteins from irreversible aggregation. Plays an important role in the bacterial defense system toward oxidative stress. This chain is 33 kDa chaperonin, found in Bacillus cytotoxicus (strain DSM 22905 / CIP 110041 / 391-98 / NVH 391-98).